The following is a 477-amino-acid chain: Glycogen synthase (477 aa).

Position 15 (Lys-15) interacts with ADP-alpha-D-glucose.

This sequence belongs to the glycosyltransferase 1 family. Bacterial/plant glycogen synthase subfamily.

It carries out the reaction [(1-&gt;4)-alpha-D-glucosyl](n) + ADP-alpha-D-glucose = [(1-&gt;4)-alpha-D-glucosyl](n+1) + ADP + H(+). Its pathway is glycan biosynthesis; glycogen biosynthesis. Synthesizes alpha-1,4-glucan chains using ADP-glucose. The chain is Glycogen synthase from Shigella flexneri.